We begin with the raw amino-acid sequence, 506 residues long: DEAD-box ATP-dependent RNA helicase CshA (506 aa).

The Q motif signature appears at 2 to 30; that stretch reads QNFKELGISDNTVQSLESMGFKEPTPIQK. Residues 33-203 form the Helicase ATP-binding domain; that stretch reads IPYALQGIDI…QQFMKSPKII (171 aa). 46–53 contributes to the ATP binding site; it reads AQTGTGKT. The DEAD box signature appears at 150-153; that stretch reads DEAD. The 162-residue stretch at 214–375 folds into the Helicase C-terminal domain; that stretch reads QIEEFYTIVK…LRPPHRKEVL (162 aa). Positions 436–506 are disordered; that stretch reads EKPLSRKGRN…KGRTFADHQK (71 aa). Residues 468 to 480 show a composition bias toward basic residues; that stretch reads KRSKGYSSKKKST.

Belongs to the DEAD box helicase family. CshA subfamily. Oligomerizes, may be a member of the RNA degradosome.

The protein resides in the cytoplasm. The enzyme catalyses ATP + H2O = ADP + phosphate + H(+). DEAD-box RNA helicase possibly involved in RNA degradation. Unwinds dsRNA in both 5'- and 3'-directions, has RNA-dependent ATPase activity. In Staphylococcus aureus (strain bovine RF122 / ET3-1), this protein is DEAD-box ATP-dependent RNA helicase CshA.